The primary structure comprises 101 residues: Urease subunit beta (101 aa).

This sequence belongs to the urease beta subunit family. In terms of assembly, heterotrimer of UreA (gamma), UreB (beta) and UreC (alpha) subunits. Three heterotrimers associate to form the active enzyme.

It localises to the cytoplasm. It catalyses the reaction urea + 2 H2O + H(+) = hydrogencarbonate + 2 NH4(+). The protein operates within nitrogen metabolism; urea degradation; CO(2) and NH(3) from urea (urease route): step 1/1. The sequence is that of Urease subunit beta from Bradyrhizobium sp. (strain BTAi1 / ATCC BAA-1182).